A 353-amino-acid polypeptide reads, in one-letter code: Photosystem II protein D1 (353 aa).

N-acetylthreonine is present on Thr2. The residue at position 2 (Thr2) is a Phosphothreonine. Helical transmembrane passes span 29–46 (YIGW…TATS), 118–133 (HFLL…EWEL), and 142–156 (WIAV…AATA). His118 lines the chlorophyll a pocket. Tyr126 contributes to the pheophytin a binding site. [CaMn4O5] cluster contacts are provided by Asp170 and Glu189. Residues 197-218 (FHMLGVAGVFGGSLFSAMHGSL) form a helical membrane-spanning segment. Residue His198 participates in chlorophyll a binding. A quinone is bound by residues His215 and 264–265 (SF). His215 serves as a coordination point for Fe cation. Residue His272 coordinates Fe cation. Residues 274 to 288 (FLAAWPVVGIWFTAL) form a helical membrane-spanning segment. Residues His332, Glu333, Asp342, and Ala344 each contribute to the [CaMn4O5] cluster site. The propeptide occupies 345-353 (AVEAPSING).

The protein belongs to the reaction center PufL/M/PsbA/D family. In terms of assembly, PSII is composed of 1 copy each of membrane proteins PsbA, PsbB, PsbC, PsbD, PsbE, PsbF, PsbH, PsbI, PsbJ, PsbK, PsbL, PsbM, PsbT, PsbX, PsbY, PsbZ, Psb30/Ycf12, at least 3 peripheral proteins of the oxygen-evolving complex and a large number of cofactors. It forms dimeric complexes. The cofactor is The D1/D2 heterodimer binds P680, chlorophylls that are the primary electron donor of PSII, and subsequent electron acceptors. It shares a non-heme iron and each subunit binds pheophytin, quinone, additional chlorophylls, carotenoids and lipids. D1 provides most of the ligands for the Mn4-Ca-O5 cluster of the oxygen-evolving complex (OEC). There is also a Cl(-1) ion associated with D1 and D2, which is required for oxygen evolution. The PSII complex binds additional chlorophylls, carotenoids and specific lipids.. In terms of processing, tyr-161 forms a radical intermediate that is referred to as redox-active TyrZ, YZ or Y-Z. C-terminally processed by CTPA; processing is essential to allow assembly of the oxygen-evolving complex and thus photosynthetic growth.

Its subcellular location is the plastid. The protein resides in the chloroplast thylakoid membrane. It carries out the reaction 2 a plastoquinone + 4 hnu + 2 H2O = 2 a plastoquinol + O2. In terms of biological role, photosystem II (PSII) is a light-driven water:plastoquinone oxidoreductase that uses light energy to abstract electrons from H(2)O, generating O(2) and a proton gradient subsequently used for ATP formation. It consists of a core antenna complex that captures photons, and an electron transfer chain that converts photonic excitation into a charge separation. The D1/D2 (PsbA/PsbD) reaction center heterodimer binds P680, the primary electron donor of PSII as well as several subsequent electron acceptors. The sequence is that of Photosystem II protein D1 from Lotus japonicus (Lotus corniculatus var. japonicus).